Reading from the N-terminus, the 120-residue chain is Small ribosomal subunit protein uS13 (120 aa).

A disordered region spans residues 93–120; sequence GLPVRGQNTKNNARTRKGPRRTVANKKK. Basic residues predominate over residues 105 to 120; sequence ARTRKGPRRTVANKKK.

This sequence belongs to the universal ribosomal protein uS13 family. In terms of assembly, part of the 30S ribosomal subunit. Has been shown to cross-link to S19 forming a loose heterodimer. Forms two bridges to the 50S subunit in the 70S ribosome.

In terms of biological role, located at the top of the head of the 30S subunit, it contacts several helices of the 16S rRNA. In the 70S ribosome it contacts the 23S rRNA (bridge B1a) and protein L5 of the 50S subunit (bridge B1b), connecting the 2 subunits; these bridges are implicated in subunit movement. Contacts the tRNA in the A and P-sites. The chain is Small ribosomal subunit protein uS13 (rpsM) from Geobacillus stearothermophilus (Bacillus stearothermophilus).